The chain runs to 136 residues: Protein BUNDLE SHEATH DEFECTIVE 2, chloroplastic (136 aa).

Residues 1–56 (MANSLCFFSSPPTFCFQSPSKNPKPSHFFSTNDNTSSLVQKRELLQTSRSQSFEVK) constitute a chloroplast transit peptide. Residues 62 to 133 (PQGTKPNSLV…AGFIGGFLST (72 aa)) form a CR-type zinc finger. Zn(2+)-binding residues include cysteine 72, cysteine 75, glutamate 78, cysteine 80, cysteine 83, cysteine 86, cysteine 107, cysteine 110, glutamate 115, cysteine 118, and cysteine 121.

This sequence belongs to the BSD2 chaperone family. As to quaternary structure, interacts with the RuBisCo large subunit (RbcL) assembled as an intermediate complex made of eight RbcL and eight BSD2 subunits.

It is found in the plastid. The protein localises to the chloroplast stroma. Chloroplast chaperone required for RuBisCo biogenesis and translational regulation of the RuBisCo large subunit (RbcL). Stabilizes an end-state assembly intermediate of eight RbcL subunits until the small subunits (RBCSs) become available to produce a complete stable RuBisCo complex containing eight small and eight large subunits. The protein is Protein BUNDLE SHEATH DEFECTIVE 2, chloroplastic of Arabidopsis thaliana (Mouse-ear cress).